A 301-amino-acid polypeptide reads, in one-letter code: Fructokinase (301 aa).

Zn(2+)-binding residues include His-165, Cys-181, His-184, and Cys-187.

It belongs to the ROK (NagC/XylR) family. Mg(2+) serves as cofactor.

It catalyses the reaction D-fructose + ATP = D-fructose 6-phosphate + ADP + H(+). Inhibition by zinc ions. The polypeptide is Fructokinase (frk) (Zymomonas mobilis subsp. mobilis (strain ATCC 31821 / ZM4 / CP4)).